Here is a 590-residue protein sequence, read N- to C-terminus: Negative elongation factor D (590 aa).

The disordered stretch occupies residues 15–43 (FGSAAEWGDEADGGQQEDDYGEGEDDAEV). The segment covering 21 to 43 (WGDEADGGQQEDDYGEGEDDAEV) has biased composition (acidic residues).

This sequence belongs to the NELF-D family. The NELF complex is composed of NELFA, NELFB, NELFCD and NELFE; NELFA and NELFCD form a stable subcomplex that binds primarily through NELFCD to the N-terminus of NELFB. Binds RNA which may help to stabilize the NELF complex on nucleic acid. In vitro, the NELFA:NELFCD subcomplex binds to ssDNA and ssRNA in a sequence- and structure-dependent manner. Interacts with ARAF1. Interacts with PCF11. Interacts with NELFB. Interacts with KAT8.

The protein resides in the nucleus. Its function is as follows. Essential component of the NELF complex, a complex that negatively regulates the elongation of transcription by RNA polymerase II. The NELF complex, which acts via an association with the DSIF complex and causes transcriptional pausing, is counteracted by the P-TEFb kinase complex. This chain is Negative elongation factor D (NELFCD), found in Sus scrofa (Pig).